The chain runs to 555 residues: Phosphoglucomutase (555 aa).

Positions 22 and 114 each coordinate alpha-D-glucose 1,6-bisphosphate. Serine 114 functions as the Phosphoserine intermediate in the catalytic mechanism. Residues serine 114, aspartate 279, aspartate 281, and aspartate 283 each contribute to the Mg(2+) site. Residue serine 114 is modified to Phosphoserine. Residues aspartate 283, arginine 284, threonine 347, glutamate 366, serine 368, and lysine 379 each contribute to the alpha-D-glucose 1,6-bisphosphate site.

This sequence belongs to the phosphohexose mutase family. As to quaternary structure, monomer. The cofactor is Mg(2+).

It localises to the cytoplasm. The enzyme catalyses alpha-D-glucose 1-phosphate = alpha-D-glucose 6-phosphate. It catalyses the reaction O-phospho-L-seryl-[protein] + alpha-D-glucose 1-phosphate = alpha-D-glucose 1,6-bisphosphate + L-seryl-[protein]. The catalysed reaction is alpha-D-glucose 1,6-bisphosphate + L-seryl-[protein] = O-phospho-L-seryl-[protein] + alpha-D-glucose 6-phosphate. Catalyzes the reversible isomerization of alpha-D-glucose 1-phosphate to alpha-D-glucose 6-phosphate. The mechanism proceeds via the intermediate compound alpha-D-glucose 1,6-bisphosphate. Key enzyme in hexose metabolism. The reverse reaction is an essential step for biosynthesis because glucose 1-phosphate is the starting point for the synthesis of UDP-glucose, which acts as a precursor for the synthesis of oligosaccharides and trehalose. The polypeptide is Phosphoglucomutase (pgmA) (Aspergillus fumigatus (strain ATCC MYA-4609 / CBS 101355 / FGSC A1100 / Af293) (Neosartorya fumigata)).